The sequence spans 1267 residues: Clustered mitochondria protein homolog (1267 aa).

TPR repeat units follow at residues 64–102 (YNLK…KPYN), 420–453 (YSFV…LNML), 716–749 (EAHE…MIKE), 795–830 (LVPL…IPAL), 904–939 (RSIC…KSRA), 1010–1043 (AEKY…YERV), and 1138–1171 (AYIK…FTKE). One can recognise a Clu domain in the interval 329 to 586 (PTNGPDYLRT…NTYPLDVEFA (258 aa)). Residues 1203-1219 (QQDQTAASGLKQQPQKS) are compositionally biased toward polar residues. The interval 1203-1267 (QQDQTAASGL…KSKSKGKNKK (65 aa)) is disordered. The segment covering 1224-1239 (NKKETTNPDLADKSVD) has biased composition (basic and acidic residues). Residues 1254 to 1267 (KTTKKSKSKGKNKK) show a composition bias toward basic residues.

Belongs to the CLU family. May associate with the eukaryotic translation initiation factor 3 (eIF-3) complex.

Its subcellular location is the cytoplasm. Its function is as follows. mRNA-binding protein involved in proper cytoplasmic distribution of mitochondria. This Candida glabrata (strain ATCC 2001 / BCRC 20586 / JCM 3761 / NBRC 0622 / NRRL Y-65 / CBS 138) (Yeast) protein is Clustered mitochondria protein homolog.